Reading from the N-terminus, the 223-residue chain is Phosphoribosylformylglycinamidine synthase subunit PurQ (223 aa).

Residues 3 to 223 (FAVLVFPGSN…MVKSWREQHV (221 aa)) enclose the Glutamine amidotransferase type-1 domain. Residue cysteine 85 is the Nucleophile of the active site. Catalysis depends on residues histidine 193 and glutamate 195.

As to quaternary structure, part of the FGAM synthase complex composed of 1 PurL, 1 PurQ and 2 PurS subunits.

It is found in the cytoplasm. It catalyses the reaction N(2)-formyl-N(1)-(5-phospho-beta-D-ribosyl)glycinamide + L-glutamine + ATP + H2O = 2-formamido-N(1)-(5-O-phospho-beta-D-ribosyl)acetamidine + L-glutamate + ADP + phosphate + H(+). The catalysed reaction is L-glutamine + H2O = L-glutamate + NH4(+). It participates in purine metabolism; IMP biosynthesis via de novo pathway; 5-amino-1-(5-phospho-D-ribosyl)imidazole from N(2)-formyl-N(1)-(5-phospho-D-ribosyl)glycinamide: step 1/2. In terms of biological role, part of the phosphoribosylformylglycinamidine synthase complex involved in the purines biosynthetic pathway. Catalyzes the ATP-dependent conversion of formylglycinamide ribonucleotide (FGAR) and glutamine to yield formylglycinamidine ribonucleotide (FGAM) and glutamate. The FGAM synthase complex is composed of three subunits. PurQ produces an ammonia molecule by converting glutamine to glutamate. PurL transfers the ammonia molecule to FGAR to form FGAM in an ATP-dependent manner. PurS interacts with PurQ and PurL and is thought to assist in the transfer of the ammonia molecule from PurQ to PurL. In Staphylococcus aureus (strain bovine RF122 / ET3-1), this protein is Phosphoribosylformylglycinamidine synthase subunit PurQ.